The chain runs to 387 residues: S-adenosylmethionine synthase (387 aa).

Position 16 (His16) interacts with ATP. Asp18 serves as a coordination point for Mg(2+). Glu44 contributes to the K(+) binding site. L-methionine is bound by residues Glu57 and Gln100. The tract at residues Gln100 to Glu110 is flexible loop. Residues Asp165 to Lys167, Asp241, Arg247 to Lys248, Ala264, and Lys268 each bind ATP. Asp241 contacts L-methionine. Lys272 provides a ligand contact to L-methionine.

The protein belongs to the AdoMet synthase family. Homotetramer; dimer of dimers. Mg(2+) serves as cofactor. K(+) is required as a cofactor.

The protein localises to the cytoplasm. The enzyme catalyses L-methionine + ATP + H2O = S-adenosyl-L-methionine + phosphate + diphosphate. The protein operates within amino-acid biosynthesis; S-adenosyl-L-methionine biosynthesis; S-adenosyl-L-methionine from L-methionine: step 1/1. Functionally, catalyzes the formation of S-adenosylmethionine (AdoMet) from methionine and ATP. The overall synthetic reaction is composed of two sequential steps, AdoMet formation and the subsequent tripolyphosphate hydrolysis which occurs prior to release of AdoMet from the enzyme. The polypeptide is S-adenosylmethionine synthase (Marinomonas sp. (strain MWYL1)).